The chain runs to 248 residues: Proteasome subunit alpha type-7 (248 aa).

Ser130 carries an O-linked (GlcNAc) serine glycan. Tyr153 bears the Phosphotyrosine mark.

It belongs to the peptidase T1A family. As to quaternary structure, the 26S proteasome consists of a 20S proteasome core and two 19S regulatory subunits. The 20S proteasome core is a barrel-shaped complex made of 28 subunits that are arranged in four stacked rings. The two outer rings are each formed by seven alpha subunits, and the two inner rings are formed by seven beta subunits. The proteolytic activity is exerted by three beta-subunits PSMB5, PSMB6 and PSMB7. PSMA7 interacts directly with the PSMG1-PSMG2 heterodimer which promotes 20S proteasome assembly. Interacts with HIF1A. Interacts with RAB7A. Interacts with PRKN. Interacts with ABL1 and ABL2. Interacts with EMAP2. Interacts with MAVS.

The protein resides in the cytoplasm. It is found in the nucleus. Its function is as follows. Component of the 20S core proteasome complex involved in the proteolytic degradation of most intracellular proteins. This complex plays numerous essential roles within the cell by associating with different regulatory particles. Associated with two 19S regulatory particles, forms the 26S proteasome and thus participates in the ATP-dependent degradation of ubiquitinated proteins. The 26S proteasome plays a key role in the maintenance of protein homeostasis by removing misfolded or damaged proteins that could impair cellular functions, and by removing proteins whose functions are no longer required. Associated with the PA200 or PA28, the 20S proteasome mediates ubiquitin-independent protein degradation. This type of proteolysis is required in several pathways including spermatogenesis (20S-PA200 complex) or generation of a subset of MHC class I-presented antigenic peptides (20S-PA28 complex). Inhibits the transactivation function of HIF-1A under both normoxic and hypoxia-mimicking conditions. The interaction with EMAP2 increases the proteasome-mediated HIF-1A degradation under the hypoxic conditions. Plays a role in hepatitis C virus internal ribosome entry site-mediated translation. Mediates nuclear translocation of the androgen receptor (AR) and thereby enhances androgen-mediated transactivation. Promotes MAVS degradation and thereby negatively regulates MAVS-mediated innate immune response. The polypeptide is Proteasome subunit alpha type-7 (PSMA7) (Pongo abelii (Sumatran orangutan)).